A 227-amino-acid polypeptide reads, in one-letter code: Small ribosomal subunit protein uS3m (227 aa).

Belongs to the universal ribosomal protein uS3 family. As to quaternary structure, component of the mitochondrial small ribosomal subunit (mt-SSU). Mature yeast 74S mitochondrial ribosomes consist of a small (37S) and a large (54S) subunit. The 37S small subunit contains a 15S ribosomal RNA (15S mt-rRNA) and at least 32 different proteins. The 54S large subunit contains a 21S rRNA (21S mt-rRNA) and at least 45 different proteins. uS3m, uS4m and uS5m form the narrow entry site of the mRNA channel.

Its subcellular location is the mitochondrion. In terms of biological role, essential for mitochondrial protein synthesis and required for the maturation of small ribosomal subunits. Component of the mitochondrial ribosome (mitoribosome), a dedicated translation machinery responsible for the synthesis of mitochondrial genome-encoded proteins, including at least some of the essential transmembrane subunits of the mitochondrial respiratory chain. The mitoribosomes are attached to the mitochondrial inner membrane and translation products are cotranslationally integrated into the membrane. uS3m is essential for mitochondrial protein synthesis and required for the maturation of small ribosomal subunits. This Schizosaccharomyces pombe (strain 972 / ATCC 24843) (Fission yeast) protein is Small ribosomal subunit protein uS3m (var1).